Here is a 126-residue protein sequence, read N- to C-terminus: Cytochrome c2 (126 aa).

Heme c-binding residues include C17, C20, H21, and M101.

The protein belongs to the cytochrome c family. Post-translationally, binds 1 heme c group covalently per subunit.

It is found in the periplasm. Cytochrome c2 is found mainly in purple, non-sulfur, photosynthetic bacteria where it functions as the electron donor to the oxidized bacteriochlorophyll in the photophosphorylation pathway. However, it may also have a role in the respiratory chain and is found in some non-photosynthetic bacteria. The sequence is that of Cytochrome c2 from Rhodovulum adriaticum (Rhodopseudomonas adriatica).